A 298-amino-acid chain; its full sequence is 4-diphosphocytidyl-2-C-methyl-D-erythritol kinase (298 aa).

K19 is an active-site residue. 106 to 116 (PVASGIGGGSA) serves as a coordination point for ATP. The active site involves D148.

It belongs to the GHMP kinase family. IspE subfamily.

It carries out the reaction 4-CDP-2-C-methyl-D-erythritol + ATP = 4-CDP-2-C-methyl-D-erythritol 2-phosphate + ADP + H(+). It functions in the pathway isoprenoid biosynthesis; isopentenyl diphosphate biosynthesis via DXP pathway; isopentenyl diphosphate from 1-deoxy-D-xylulose 5-phosphate: step 3/6. In terms of biological role, catalyzes the phosphorylation of the position 2 hydroxy group of 4-diphosphocytidyl-2C-methyl-D-erythritol. The protein is 4-diphosphocytidyl-2-C-methyl-D-erythritol kinase of Rhizobium leguminosarum bv. trifolii (strain WSM2304).